The sequence spans 148 residues: Large ribosomal subunit protein bL9 (148 aa).

Belongs to the bacterial ribosomal protein bL9 family.

Its function is as follows. Binds to the 23S rRNA. This chain is Large ribosomal subunit protein bL9, found in Thermus thermophilus (strain ATCC BAA-163 / DSM 7039 / HB27).